Here is a 358-residue protein sequence, read N- to C-terminus: Alanine racemase (358 aa).

The active-site Proton acceptor; specific for D-alanine is lysine 35. Lysine 35 bears the N6-(pyridoxal phosphate)lysine mark. Substrate is bound at residue arginine 131. The active-site Proton acceptor; specific for L-alanine is the tyrosine 253. A substrate-binding site is contributed by methionine 301.

This sequence belongs to the alanine racemase family. It depends on pyridoxal 5'-phosphate as a cofactor.

The enzyme catalyses L-alanine = D-alanine. It participates in amino-acid biosynthesis; D-alanine biosynthesis; D-alanine from L-alanine: step 1/1. Catalyzes the interconversion of L-alanine and D-alanine. May also act on other amino acids. This Alteromonas mediterranea (strain DSM 17117 / CIP 110805 / LMG 28347 / Deep ecotype) protein is Alanine racemase (alr).